The sequence spans 437 residues: Probable eukaryotic translation initiation factor 5-2 (437 aa).

29–36 (GKGNGIKT) is a GTP binding site. 2 stretches are compositionally biased toward basic and acidic residues: residues 148 to 179 (EQKK…EQRK) and 191 to 212 (KDSK…HDEN). Disordered stretches follow at residues 148-231 (EQKK…WQTD) and 262-284 (EKKA…PPQE). A Phosphoserine; by CK2 modification is found at Ser201. Positions 213–226 (ALEVDEDEDDDDGV) are enriched in acidic residues. Thr230 is modified (phosphothreonine; by CK2). Residues 278 to 436 (ENPPPQEKNL…QSAESESEEE (159 aa)) form the W2 domain. Phosphoserine; by CK2 occurs at positions 428, 431, and 433.

The protein belongs to the eIF-2-beta/eIF-5 family. Phosphorylated at Ser-201, Thr-230, Ser-428, Ser-431, and Ser-433 by CK2.

Catalyzes the hydrolysis of GTP bound to the 40S ribosomal initiation complex (40S.mRNA.Met-tRNA[F].eIF-2.GTP) with the subsequent joining of a 60S ribosomal subunit resulting in the release of eIF-2 and the guanine nucleotide. The subsequent joining of a 60S ribosomal subunit results in the formation of a functional 80S initiation complex (80S.mRNA.Met-tRNA[F]). The chain is Probable eukaryotic translation initiation factor 5-2 from Arabidopsis thaliana (Mouse-ear cress).